We begin with the raw amino-acid sequence, 419 residues long: MAALCGGMLRGCILKPLGLSGSLQLKRNVRALRRTPVRVIQADEEGRERKQVEASRQRQPRQNESQACKAVGVSPATVDIEAPAHEFRYERALPGDKRLSKVVTIAKSKKFRDRHGQVLLEGQRLLTDALDSGAVLQTLFFSRVDYLKEFPPDKLRKTNLIKVNFENIKIWSDLVTPQGLMGIFAKPDHVKMTYPDTQTKHTLPLSLICDNIRDPGNLGTILRCAAGAGCSKVLLTKGCVDAWEPKVLRAGMGAHFRLPIITSLDWDIVPNYLPAGTKVFLADNFRPDNQNKPAEVSEKASDYGWVATDPKRIFITEDGYESSSDEEDNTDKLYIPGLEVQSYFERWAQGPCAVVIGGETHGLSIESLLLAEKSNGKRLNIPVVPGIDSLNSAMAASILLFEGKRQIENTMKRKSCVTE.

The N-terminal 39 residues, 1 to 39, are a transit peptide targeting the mitochondrion; sequence MAALCGGMLRGCILKPLGLSGSLQLKRNVRALRRTPVRV. Residues 42-68 form a disordered region; the sequence is ADEEGRERKQVEASRQRQPRQNESQAC. A compositionally biased stretch (basic and acidic residues) spans 44–56; it reads EEGRERKQVEASR. Positions 357, 381, and 390 each coordinate S-adenosyl-L-methionine.

Belongs to the class IV-like SAM-binding methyltransferase superfamily. RNA methyltransferase TrmH family.

It localises to the mitochondrion. The enzyme catalyses a uridine in rRNA + S-adenosyl-L-methionine = a 2'-O-methyluridine in rRNA + S-adenosyl-L-homocysteine + H(+). In terms of biological role, S-adenosyl-L-methionine-dependent 2'-O-ribose methyltransferase that catalyzes the formation of 2'-O-methylguanosine at position 1370 (Gm1370) in the mitochondrial large subunit ribosomal RNA (mtLSU rRNA), a conserved modification in the peptidyl transferase domain of the mtLSU rRNA. Also required for formation of 2'-O-methyluridine at position 1369 (Um1369) mediated by MRM2. This chain is rRNA methyltransferase 3, mitochondrial, found in Xenopus laevis (African clawed frog).